The chain runs to 156 residues: Urease accessory protein UreE (156 aa).

Positions 133–156 (RPESGAYGSGRTMGHDHGPFHVHA) are disordered. Positions 145–156 (MGHDHGPFHVHA) are enriched in basic and acidic residues.

Belongs to the UreE family.

Its subcellular location is the cytoplasm. Its function is as follows. Involved in urease metallocenter assembly. Binds nickel. Probably functions as a nickel donor during metallocenter assembly. In Rhodobacter capsulatus (Rhodopseudomonas capsulata), this protein is Urease accessory protein UreE.